The primary structure comprises 400 residues: Formate-dependent phosphoribosylglycinamide formyltransferase (400 aa).

Residues 22–23 (EL) and glutamate 82 each bind N(1)-(5-phospho-beta-D-ribosyl)glycinamide. ATP-binding positions include arginine 115, lysine 156, 161–166 (SSGKGQ), 196–199 (EGFI), and glutamate 204. Residues 120–309 (RLAAETLCLP…EFALHARAIL (190 aa)) form the ATP-grasp domain. 2 residues coordinate Mg(2+): glutamate 268 and glutamate 280. N(1)-(5-phospho-beta-D-ribosyl)glycinamide is bound by residues aspartate 287, lysine 361, and 368–369 (RR).

It belongs to the PurK/PurT family. As to quaternary structure, homodimer.

It carries out the reaction N(1)-(5-phospho-beta-D-ribosyl)glycinamide + formate + ATP = N(2)-formyl-N(1)-(5-phospho-beta-D-ribosyl)glycinamide + ADP + phosphate + H(+). It functions in the pathway purine metabolism; IMP biosynthesis via de novo pathway; N(2)-formyl-N(1)-(5-phospho-D-ribosyl)glycinamide from N(1)-(5-phospho-D-ribosyl)glycinamide (formate route): step 1/1. In terms of biological role, involved in the de novo purine biosynthesis. Catalyzes the transfer of formate to 5-phospho-ribosyl-glycinamide (GAR), producing 5-phospho-ribosyl-N-formylglycinamide (FGAR). Formate is provided by PurU via hydrolysis of 10-formyl-tetrahydrofolate. This Xanthomonas euvesicatoria pv. vesicatoria (strain 85-10) (Xanthomonas campestris pv. vesicatoria) protein is Formate-dependent phosphoribosylglycinamide formyltransferase.